Consider the following 520-residue polypeptide: Maturase K (520 aa).

Belongs to the intron maturase 2 family. MatK subfamily.

The protein resides in the plastid. It is found in the chloroplast. Functionally, usually encoded in the trnK tRNA gene intron. Probably assists in splicing its own and other chloroplast group II introns. In Cycas taitungensis (Prince sago), this protein is Maturase K.